Here is a 678-residue protein sequence, read N- to C-terminus: Proprotein convertase subtilisin/kexin type 4 (678 aa).

Residues 1–26 (MRPSQTALWLGLVLSLALLAVGWASA) form the signal peptide. Residues 27–110 (RPPIYVSSWA…QQTLRRRVKR (84 aa)) constitute a propeptide that is removed on maturation. One can recognise a Peptidase S8 domain in the interval 123–437 (QWYMNKEIEQ…YGLLDAGLLV (315 aa)). Active-site charge relay system residues include Asp-155, His-196, and Ser-370. The P/Homo B domain occupies 446 to 580 (TKPQKKCTIR…TLLLYGTAED (135 aa)). The N-linked (GlcNAc...) asparagine glycan is linked to Asn-472.

It belongs to the peptidase S8 family. Furin subfamily. In terms of assembly, the proPCSK4 form interacts with HSPA5; the interaction takes place at the endoplasmic reticulum. Post-translationally, N-glycosylated. In terms of processing, synthesized in the endoplasmic reticulum as a zymogen, is matured by autocatalytic cleavage between the prodomain and the catalytic domain. Expressed abundantly in the testis. High levels seen in germ cells but not in Leydig, Sertoli or peritubular cells. Expressed in the pachytene spermatocytes and the round spermatids but not in the elongating spermatids. May be expressed within hormonally stimulated ovaries.

It is found in the cytoplasmic vesicle. It localises to the secretory vesicle. Its subcellular location is the acrosome membrane. Functionally, proprotein convertase involved in the processing of hormone and other protein precursors at sites comprised of pairs of basic amino acid residues. In males, important for ADAM2 processing as well as other acrosomal proteins with roles in fertilization and critical for normal fertilization events such as sperm capacitation, acrosome reaction and binding of sperm to zona pellucida. Plays also a role in female fertility, involved in the regulation of trophoblast migration and placental development, may be through the proteolytical processing and activation of proteins such as IGF2. May also participate in folliculogenesis in the ovaries. The protein is Proprotein convertase subtilisin/kexin type 4 (Pcsk4) of Rattus norvegicus (Rat).